Consider the following 260-residue polypeptide: tRNA pseudouridine synthase A (260 aa).

Residue aspartate 52 is the Nucleophile of the active site. Tyrosine 111 provides a ligand contact to substrate.

This sequence belongs to the tRNA pseudouridine synthase TruA family. In terms of assembly, homodimer.

It catalyses the reaction uridine(38/39/40) in tRNA = pseudouridine(38/39/40) in tRNA. In terms of biological role, formation of pseudouridine at positions 38, 39 and 40 in the anticodon stem and loop of transfer RNAs. This chain is tRNA pseudouridine synthase A, found in Beijerinckia indica subsp. indica (strain ATCC 9039 / DSM 1715 / NCIMB 8712).